Consider the following 70-residue polypeptide: Large ribosomal subunit protein bL32c (70 aa).

2 disordered regions span residues 1–20 (MAVP…KNVR) and 51–70 (NDDS…LDDP). Over residues 52–61 (DDSSGSSESK) the composition is skewed to polar residues.

This sequence belongs to the bacterial ribosomal protein bL32 family.

It is found in the plastid. It localises to the chloroplast. The sequence is that of Large ribosomal subunit protein bL32c (rpl32) from Pinus thunbergii (Japanese black pine).